A 121-amino-acid polypeptide reads, in one-letter code: NLYQFGKMIFKMTGKSALLSYSDYGCYCGWGGKGKPLDATDRCCFVHDCCYGRVNGCNPKLSTYSYSFQNGDIVCGDDNACLRAVCECDRVAAICFGENLNTYDRKYKDYPSSQCTETEQC.

7 disulfides stabilise this stretch: Cys26–Cys115, Cys28–Cys44, Cys43–Cys95, Cys49–Cys121, Cys50–Cys88, Cys57–Cys81, and Cys75–Cys86. Ca(2+)-binding residues include Tyr27, Gly29, and Gly31. The active site involves His47. Asp48 is a binding site for Ca(2+). Residue Asp89 is part of the active site.

The protein belongs to the phospholipase A2 family. Group II subfamily. D49 sub-subfamily. Ca(2+) is required as a cofactor. In terms of tissue distribution, expressed by the venom gland.

Its subcellular location is the secreted. It catalyses the reaction a 1,2-diacyl-sn-glycero-3-phosphocholine + H2O = a 1-acyl-sn-glycero-3-phosphocholine + a fatty acid + H(+). PLA2 catalyzes the calcium-dependent hydrolysis of the 2-acyl groups in 3-sn-phosphoglycerides. The chain is Acidic phospholipase A2 PLA-1 from Eristicophis macmahoni (Leaf-nosed viper).